A 591-amino-acid polypeptide reads, in one-letter code: F420 non-reducing hydrogenase II large subunit (591 aa).

Glutamate 42 contributes to the Mg(2+) binding site. 4 residues coordinate Ni(2+): cysteine 61, cysteine 64, cysteine 569, and cysteine 572. Cysteine 64 lines the Fe cation pocket. Cysteine 572 provides a ligand contact to Fe cation. Histidine 575 provides a ligand contact to Mg(2+).

This sequence belongs to the [NiFe]/[NiFeSe] hydrogenase large subunit family. As to quaternary structure, composed of a large subunit (VhtA), a small subunit (VhtG) and a cytochrome subunit (VhtC). Ni(2+) is required as a cofactor. Fe cation serves as cofactor.

The protein localises to the cell membrane. It carries out the reaction methanophenazine + H2 = dihydromethanophenazine. In terms of biological role, part of the F420 non-reducing hydrogenase II complex that catalyzes the reduction of methanophenazine to dihydromethanophenazine. The chain is F420 non-reducing hydrogenase II large subunit from Methanosarcina mazei (strain ATCC BAA-159 / DSM 3647 / Goe1 / Go1 / JCM 11833 / OCM 88) (Methanosarcina frisia).